The chain runs to 94 residues: DNA-directed RNA polymerase subunit omega (94 aa).

This sequence belongs to the RNA polymerase subunit omega family. The RNAP catalytic core consists of 2 alpha, 1 beta, 1 beta' and 1 omega subunit. When a sigma factor is associated with the core the holoenzyme is formed, which can initiate transcription.

The catalysed reaction is RNA(n) + a ribonucleoside 5'-triphosphate = RNA(n+1) + diphosphate. In terms of biological role, promotes RNA polymerase assembly. Latches the N- and C-terminal regions of the beta' subunit thereby facilitating its interaction with the beta and alpha subunits. The chain is DNA-directed RNA polymerase subunit omega from Bifidobacterium longum subsp. infantis (strain ATCC 15697 / DSM 20088 / JCM 1222 / NCTC 11817 / S12).